The following is a 155-amino-acid chain: Protein-export protein SecB (155 aa).

Belongs to the SecB family. Homotetramer, a dimer of dimers. One homotetramer interacts with 1 SecA dimer.

It is found in the cytoplasm. In terms of biological role, one of the proteins required for the normal export of preproteins out of the cell cytoplasm. It is a molecular chaperone that binds to a subset of precursor proteins, maintaining them in a translocation-competent state. It also specifically binds to its receptor SecA. In Shigella sonnei (strain Ss046), this protein is Protein-export protein SecB.